The sequence spans 2359 residues: Pre-mRNA-processing-splicing factor 8B (2359 aa).

The tract at residues 1-50 is disordered; that stretch reads MWNIDGTSLAPPGTDGSRMQTPSHPADHPSYTAPSNRNTPTVPTPEDAEA. The span at 32–41 shows a compositional bias: polar residues; the sequence is TAPSNRNTPT. The MPN domain maps to 2129-2260; sequence TYIMPKNILK…LTSYKLTQAG (132 aa).

It is found in the nucleus. Functions as a scaffold that mediates the ordered assembly of spliceosomal proteins and snRNAs. Required for the assembly of the U4/U6-U5 tri-snRNP complex. This Arabidopsis thaliana (Mouse-ear cress) protein is Pre-mRNA-processing-splicing factor 8B.